Consider the following 268-residue polypeptide: Kynurenine formamidase (268 aa).

Positions 33-37 (HGGGW) match the HGGXW motif. The Nucleophile role is filled by Ser107. Residues Asp219 and His251 contribute to the active site.

Belongs to the kynurenine formamidase family. As to quaternary structure, homodimer.

It carries out the reaction N-formyl-L-kynurenine + H2O = L-kynurenine + formate + H(+). It functions in the pathway amino-acid degradation; L-tryptophan degradation via kynurenine pathway; L-kynurenine from L-tryptophan: step 2/2. Its function is as follows. Catalyzes the hydrolysis of N-formyl-L-kynurenine to L-kynurenine, the second step in the kynurenine pathway of tryptophan degradation. Kynurenine may be further oxidized to nicotinic acid, NAD(H) and NADP(H). Required for elimination of toxic metabolites. This Scheffersomyces stipitis (strain ATCC 58785 / CBS 6054 / NBRC 10063 / NRRL Y-11545) (Yeast) protein is Kynurenine formamidase.